The sequence spans 500 residues: MPPAGGIFHRPPTTRKSRRLTPRSACSNSTCSRTWGEQPWLLALHSIDSDRNAGRRPCKRRAIAMIRTIKSARGSVVNGGNGAMTSAVQTLLDQVEQGGDRAVRELSIRFDKFDRDSYRLTKAEIDACINSLTGREREDLDFAQDQIRNFAEAQRATLLDLEIETLPGVVLGHRNVPIQNVGCYVPGGKYPLLASAHMTVLTARVAGCERIITCAPPFQGKVAEKIVAAQALAGADEIYCLGGVQAIAAMAYGTETIAPVDMVAGPGNAYVAEAKRLLFGKVGIDLFAGPTETLVIADDSVDGELVATDLLGQAEHGVNSPAVLITNSEKLALDTVAEIGRLLTILPTAAIAAKAWEDFGEIILCETTKEMVAEADRLASEHVQVMTRDPDHFLNSMRNYGALFLGARTNVSFGDKVIGTNHTLPTNKAARYTGGLWVGKFLKTCTYQRILTDEASALIGEYGSRLSLMEGFVGHAEQSNIRVRRYGGRNVGYAMPVDPR.

A disordered region spans residues 1 to 25 (MPPAGGIFHRPPTTRKSRRLTPRSA). The span at 12–21 (PTTRKSRRLT) shows a compositional bias: basic residues. The Zn(2+) site is built by glutamine 313 and histidine 316. Catalysis depends on proton acceptor residues glutamate 381 and histidine 382. Zn(2+) is bound by residues aspartate 415 and histidine 475.

This sequence belongs to the histidinol dehydrogenase family. Zn(2+) serves as cofactor.

This chain is Histidinol dehydrogenase homolog 1, found in Mesorhizobium japonicum (strain LMG 29417 / CECT 9101 / MAFF 303099) (Mesorhizobium loti (strain MAFF 303099)).